The primary structure comprises 446 residues: Ribosome biogenesis protein WDR12 homolog (446 aa).

Residues 21-105 (VQITFFSKDK…ETILKIECII (85 aa)) form a ubiquitin-like (UBL) domain region. 2 WD repeats span residues 171-211 (KCSG…LVEK) and 216-255 (GHERAVECVSVNSDATRAISGSVDTNLKVWNLDPSDEATI). The tract at residues 256-275 (YEKEEEESSAKKKRKKDTRT) is disordered. WD repeat units lie at residues 284 to 324 (GHRD…EVSR), 326 to 365 (KGPKSFTSIDIHPTSNLLISSCTDAIPRLYDPKNRDGAMV), 371 to 412 (GHQN…SSLF), and 416 to 446 (GHEDRILCAAWNEGLIATGSADCSIKIFETS).

The protein belongs to the WD repeat WDR12/YTM1 family.

Its subcellular location is the nucleus. The protein localises to the nucleolus. It is found in the nucleoplasm. Functionally, required for maturation of ribosomal RNAs and formation of the large ribosomal subunit. This chain is Ribosome biogenesis protein WDR12 homolog, found in Caenorhabditis briggsae.